The chain runs to 129 residues: Small ribosomal subunit protein uS8 (129 aa).

The protein belongs to the universal ribosomal protein uS8 family. Part of the 30S ribosomal subunit.

In terms of biological role, one of the primary rRNA binding proteins, it binds directly to 16S rRNA central domain where it helps coordinate assembly of the platform of the 30S subunit. The sequence is that of Small ribosomal subunit protein uS8 from Nanoarchaeum equitans (strain Kin4-M).